Reading from the N-terminus, the 156-residue chain is Small ribosomal subunit protein uS7cz/uS7cy (156 aa).

The protein belongs to the universal ribosomal protein uS7 family. Part of the 30S ribosomal subunit.

The protein resides in the plastid. It localises to the chloroplast. Its function is as follows. One of the primary rRNA binding proteins, it binds directly to 16S rRNA where it nucleates assembly of the head domain of the 30S subunit. This Saccharum hybrid (Sugarcane) protein is Small ribosomal subunit protein uS7cz/uS7cy (rps7-A).